A 344-amino-acid chain; its full sequence is Autoinducer 2 import system permease protein LsrC (344 aa).

Helical transmembrane passes span 13-33 (FFAI…YFIL), 38-58 (MIFA…LVML), 69-89 (TVGL…GLAT), 90-110 (AIAF…LLVV), 114-134 (IPAI…MLLW), 155-175 (FIGV…GGWL), 212-232 (LNGM…GFVP), 251-271 (GISL…AFFL), and 283-303 (LPAW…LVLD). A disordered region spans residues 323–344 (QPGNKGSKQVARFPERKSKEVA). The segment covering 335 to 344 (FPERKSKEVA) has biased composition (basic and acidic residues).

The protein belongs to the binding-protein-dependent transport system permease family. AraH/RbsC subfamily. As to quaternary structure, the complex is composed of two ATP-binding proteins (LsrA), two transmembrane proteins (LsrC and LsrD) and a solute-binding protein (LsrB).

The protein resides in the cell inner membrane. Part of the ABC transporter complex LsrABCD involved in autoinducer 2 (AI-2) import. Probably responsible for the translocation of the substrate across the membrane. In Klebsiella pneumoniae subsp. pneumoniae (strain ATCC 700721 / MGH 78578), this protein is Autoinducer 2 import system permease protein LsrC (lsrC).